Reading from the N-terminus, the 255-residue chain is Cytosolic Fe-S cluster assembly factor Nubp2 homolog (255 aa).

Residue 14–21 (GKGGVGKS) coordinates ATP. Positions 185 and 188 each coordinate [4Fe-4S] cluster.

This sequence belongs to the Mrp/NBP35 ATP-binding proteins family. NUBP2/CFD1 subfamily. Heterotetramer of 2 Nubp1 and 2 Nubp2 chains. Requires [4Fe-4S] cluster as cofactor.

The protein resides in the cytoplasm. Its function is as follows. Component of the cytosolic iron-sulfur (Fe/S) protein assembly (CIA) machinery. Required for maturation of extramitochondrial Fe-S proteins. The Nubp1-Nubp2 heterotetramer forms a Fe-S scaffold complex, mediating the de novo assembly of an Fe-S cluster and its transfer to target apoproteins. This is Cytosolic Fe-S cluster assembly factor Nubp2 homolog from Drosophila persimilis (Fruit fly).